The following is a 193-amino-acid chain: Phosphoheptose isomerase (193 aa).

One can recognise an SIS domain in the interval 37 to 193; the sequence is LADSFKAGGK…QLIEKEMVKA (157 aa). 52–54 serves as a coordination point for substrate; the sequence is NGG. H61 and E65 together coordinate Zn(2+). Residues E65, 93–94, 119–121, S124, and Q172 each bind substrate; these read ND and STS. 2 residues coordinate Zn(2+): Q172 and H180.

It belongs to the SIS family. GmhA subfamily. As to quaternary structure, homotetramer. Requires Zn(2+) as cofactor.

It is found in the cytoplasm. The enzyme catalyses 2 D-sedoheptulose 7-phosphate = D-glycero-alpha-D-manno-heptose 7-phosphate + D-glycero-beta-D-manno-heptose 7-phosphate. It participates in carbohydrate biosynthesis; D-glycero-D-manno-heptose 7-phosphate biosynthesis; D-glycero-alpha-D-manno-heptose 7-phosphate and D-glycero-beta-D-manno-heptose 7-phosphate from sedoheptulose 7-phosphate: step 1/1. Functionally, catalyzes the isomerization of sedoheptulose 7-phosphate in D-glycero-D-manno-heptose 7-phosphate. The protein is Phosphoheptose isomerase of Serratia proteamaculans (strain 568).